We begin with the raw amino-acid sequence, 105 residues long: Met repressor (105 aa).

It belongs to the MetJ family. Homodimer.

It localises to the cytoplasm. In terms of biological role, this regulatory protein, when combined with SAM (S-adenosylmethionine) represses the expression of the methionine regulon and of enzymes involved in SAM synthesis. The protein is Met repressor of Actinobacillus succinogenes (strain ATCC 55618 / DSM 22257 / CCUG 43843 / 130Z).